We begin with the raw amino-acid sequence, 299 residues long: MGFVKVVKNKQYFKRYQVKFKRRREGKTDYYARKRLVVQDKNKYNTPKYRLIVRLSNKDVTCQVAYSRIEGDHIVCAAYSHELPRYGVKVGLTNYAAAYSTGLLLARRLLQRLGLDTLYTGTTDVTGDEYNVEPVDNGPGAFRCYLDVGLARTTTGRRVFGAMKGAVDGGLNVPHSIKRFPGYDAESKKFNAEVHRAHIFGLHVAEYMRSLEQDDEDSFKRQFSKYIKLGVTADAIEAIYKKAHEAIRADPSHKKKELKKDSVKQKRWNKRKLTLAERKNRIKQKKASFIKRLQAQAEA.

This sequence belongs to the universal ribosomal protein uL18 family. In terms of assembly, component of the large ribosomal subunit (LSU).

It localises to the cytoplasm. Its subcellular location is the nucleus. Functionally, component of the ribosome, a large ribonucleoprotein complex responsible for the synthesis of proteins in the cell. The small ribosomal subunit (SSU) binds messenger RNAs (mRNAs) and translates the encoded message by selecting cognate aminoacyl-transfer RNA (tRNA) molecules. The large subunit (LSU) contains the ribosomal catalytic site termed the peptidyl transferase center (PTC), which catalyzes the formation of peptide bonds, thereby polymerizing the amino acids delivered by tRNAs into a polypeptide chain. The nascent polypeptides leave the ribosome through a tunnel in the LSU and interact with protein factors that function in enzymatic processing, targeting, and the membrane insertion of nascent chains at the exit of the ribosomal tunnel. This chain is Large ribosomal subunit protein uL18 (RpL5), found in Bombyx mori (Silk moth).